The primary structure comprises 291 residues: RPE-retinal G protein-coupled receptor (291 aa).

The Extracellular portion of the chain corresponds to 1-15 (MAATRALPAGLGELE). A helical transmembrane segment spans residues 16-36 (VLAVGTVLLMEALSGISLNGL). Residues 37–52 (TIFSFCKTPDLRTPSN) lie on the Cytoplasmic side of the membrane. The chain crosses the membrane as a helical span at residues 53-73 (LLVLSLALADTGISLNALVAA). The Extracellular segment spans residues 74–91 (VSSLLRRWPHGSEGCQVH). Cys-88 and Cys-162 form a disulfide bridge. The helical transmembrane segment at 92 to 112 (GFQGFATALASICGSAAVAWG) threads the bilayer. Residues 113–130 (RYHHYCTRRQLAWDTAIP) are Cytoplasmic-facing. The helical transmembrane segment at 131–151 (LVLFVWMSSAFWASLPLMGWG) threads the bilayer. Topologically, residues 152 to 175 (HYDYEPVGTCCTLDYSRGDRNFIS) are extracellular. The helical transmembrane segment at 176 to 196 (FLFTMAFFNFLVPLFITHTSY) threads the bilayer. The Cytoplasmic portion of the chain corresponds to 197 to 219 (RFMEQKFSRSGHLPVNTTLPGRM). Residues 220–240 (LLLGWGPYALLYLYAAIADVS) traverse the membrane as a helical segment. Residues 241-247 (FISPKLQ) are Extracellular-facing. A helical transmembrane segment spans residues 248-268 (MVPALIAKTMPTINAINYALH). The residue at position 255 (Lys-255) is an N6-(retinylidene)lysine. The Cytoplasmic portion of the chain corresponds to 269–291 (REMVCRGTWQCLSPQKSKKDRTQ).

This sequence belongs to the G-protein coupled receptor 1 family. Opsin subfamily. Post-translationally, covalently binds all-trans- and 11-cis-retinal.

It localises to the membrane. Functionally, receptor for all-trans- and 11-cis-retinal. Binds preferentially to the former and may catalyze the isomerization of the chromophore by a retinochrome-like mechanism. In Mus musculus (Mouse), this protein is RPE-retinal G protein-coupled receptor (Rgr).